The chain runs to 1910 residues: C2 domain-containing protein (1910 aa).

Basic and acidic residues predominate over residues 1 to 28; that stretch reads MMKLKEMVEAAEAKVESKPPQAAEEKAP. 3 disordered regions span residues 1-54, 355-377, and 398-428; these read MMKL…EPLD, AMKLPNRGTRSPSGLESNRPEDG, and LEELPASLRPPLSKRRKGEDKKDGNKADGPQ. Basic and acidic residues predominate over residues 414–423; that stretch reads KGEDKKDGNK. A C2 domain is found at 557-678; it reads QLGEVSESDS…FFNEKHNKRN (122 aa). Composition is skewed to basic and acidic residues over residues 1192-1205 and 1215-1228; these read LAQKEKQSREDAQR and GHEGADNGAEDKQG. 6 disordered regions span residues 1192–1267, 1405–1424, 1431–1654, 1666–1747, 1822–1841, and 1879–1910; these read LAQK…VKKG, ATAGEGEQQTSEGIPTRDMQ, LEEA…SMGA, QRKH…FLSS, AKEEKDLIARQPPPARDWSD, and DACSRRAESSNESRTTAGAKLRQQQLDLAGRT. 2 stretches are compositionally biased toward low complexity: residues 1239 to 1257 and 1405 to 1414; these read AAAAAVAEESVSAEAVQGA and ATAGEGEQQT. Over residues 1440–1469 the composition is skewed to basic residues; the sequence is KKKKKKEKKEKKEKKEKKEKKEKKEKKKKK. Residues 1492–1502 are compositionally biased toward low complexity; the sequence is PAAAIPSVLLP. A compositionally biased stretch (basic residues) spans 1517–1526; it reads KKEKKEKKKK. Low complexity predominate over residues 1550–1561; the sequence is PAAAIPSILLPA. A compositionally biased stretch (basic and acidic residues) spans 1569 to 1584; sequence EKPKEKKTEKKKEKHT. Residues 1595–1604 show a composition bias toward polar residues; it reads LPESETTAVV. Composition is skewed to low complexity over residues 1620-1629 and 1675-1698; these read VPSSIASSEA and SSSSSSEVSASSASSLSPSSSSSS. Positions 1701–1711 are enriched in basic and acidic residues; sequence AETRAKADALR. Low complexity-rich tracts occupy residues 1712 to 1722 and 1729 to 1747; these read ARLQAAQARLA and VSSSETESSETSEASFLSS. A coiled-coil region spans residues 1766 to 1828; it reads QQRLQKMVSG…TRRAKEEKDL (63 aa). Residues 1890 to 1904 are compositionally biased toward polar residues; that stretch reads ESRTTAGAKLRQQQL.

It localises to the membrane. Regulates microneme secretion. Probably involved in regulation of rhoptry and dense granule secretion. The chain is C2 domain-containing protein from Toxoplasma gondii.